The sequence spans 394 residues: Flavohemoprotein (394 aa).

Residues 1-136 (MLSENTINIV…LANVFIQREE (136 aa)) enclose the Globin domain. Histidine 85 lines the heme b pocket. Catalysis depends on charge relay system residues tyrosine 95 and glutamate 135. A reductase region spans residues 147-394 (GGWRGLREFE…YECFGPHKVV (248 aa)). The FAD-binding FR-type domain maps to 150 to 255 (RGLREFELVE…AAPAGDFFLD (106 aa)). Residues tyrosine 188 and 204–207 (RQYS) contribute to the FAD site. Position 268-273 (268-273 (GVGLTP)) interacts with NADP(+). 387-390 (CFGP) is an FAD binding site.

It belongs to the globin family. Two-domain flavohemoproteins subfamily. The protein in the C-terminal section; belongs to the flavoprotein pyridine nucleotide cytochrome reductase family. Requires heme b as cofactor. The cofactor is FAD.

The catalysed reaction is 2 nitric oxide + NADPH + 2 O2 = 2 nitrate + NADP(+) + H(+). It carries out the reaction 2 nitric oxide + NADH + 2 O2 = 2 nitrate + NAD(+) + H(+). Functionally, is involved in NO detoxification in an aerobic process, termed nitric oxide dioxygenase (NOD) reaction that utilizes O(2) and NAD(P)H to convert NO to nitrate, which protects the bacterium from various noxious nitrogen compounds. Therefore, plays a central role in the inducible response to nitrosative stress. The chain is Flavohemoprotein from Vibrio vulnificus (strain YJ016).